The following is a 2342-amino-acid chain: Outer kinetochore KNL1 complex subunit KNL1 (2342 aa).

Positions 1–56 (MDGVSSEANEENDNIERPVRRRHSSILKPPRSPLQDLRGGNERVQESNALRNKKNS) are disordered. The interval 1 to 250 (MDGVSSEANE…FNDFIKRLKT (250 aa)) is may mediate oligomerization. The tract at residues 1–728 (MDGVSSEANE…QSLFSTTKPL (728 aa)) is interaction with BUB1 and BUB1B. Interaction with microtubules regions lie at residues 17–34 (RPVR…RSPL) and 53–80 (KKNS…VRKS). The segment at 23–80 (HSSILKPPRSPLQDLRGGNERVQESNALRNKKNSRRVSFADTIKVFQTESHMKIVRKS) is interaction with PP1CA; contains the protein phosphatase 1 (PP1) interaction motifs SILK, RVXF and phi-phi. Ser24 is subject to Phosphoserine; by AURKB. Ser32 is subject to Phosphoserine. Ser60 bears the Phosphoserine; by AURKB mark. The tract at residues 174-190 (ENQMDLTSSHTVMITKG) is interaction with BUB1. The interval 210–226 (ANLKLHTEDSRMKKEVN) is interaction with BUB1B. Thr539 is subject to Phosphothreonine. Phosphoserine is present on residues Ser578 and Ser584. At Thr586 the chain carries Phosphothreonine. Residues 620-646 (APESTSESHSQSKSSSDECEEITKSRN) form a disordered region. Residues 622–633 (ESTSESHSQSKS) are compositionally biased toward low complexity. Ser767 carries the phosphoserine modification. A 2 X 104 AA approximate repeats region spans residues 855–1201 (EDESVQKPKF…VTDSHTVFID (347 aa)). The stretch at 885–989 (DKTIVFSEDD…MTESHTVFID (105 aa)) is repeat 1. At Thr901 the chain carries Phosphothreonine. Phosphoserine is present on residues Ser956, Ser1039, Ser1076, and Ser1088. Residues 1099–1201 (DKTIVFSENH…VTDSHTVFID (103 aa)) form repeat 2. Ser1448 is modified (phosphoserine). The tract at residues 1639–1662 (SNAKDSRDEENKKSHNGAETTSLP) is disordered. Basic and acidic residues predominate over residues 1642–1651 (KDSRDEENKK). A phosphoserine mark is found at Ser1675 and Ser1773. The Nuclear localization signal signature appears at 1789 to 1803 (TWVQEEEDIHKEKKI). At Ser1831 the chain carries Phosphoserine. Residues Ser1831 and Ser1834 each carry the phosphoserine; by TTK modification. 2 positions are modified to phosphoserine: Ser1845 and Ser1860. The required for interaction with ZWINT stretch occupies residues 1981–2108 (KMRHCSDKEL…LLELEVQKEQ (128 aa)). Residues 2024–2133 (VQSAQNEREK…EELLDQLSLS (110 aa)) are a coiled coil. The segment at 2091-2311 (EEEELQRNLL…GNTSQDDIAT (221 aa)) is interaction with NSL1, DSN1 and required for assembly into the outer kinetochore.

In terms of assembly, component of the KNL1 complex composed of KNL1 and ZWINT. Part of the ten-subunit outer kinetochore KMN network that includes the KNL1, MIS12 and NDC80 complexes; a bioriented kinetochore contains approximately 150 copies of the network. Interacts (via C-terminus) with the MIS12 complex subunits NSL1 (via C-terminus), PMF1 and DSN1; the interaction is direct. Interacts (via N-terminal region) with BUB1B (via BUB1 N-terminal domain); the interaction is direct and is required for cell cycle arrest upon activation of the mitotic spindle assembly checkpoint. Interacts (via N-terminal region) with BUB1 (via BUB1 N-terminal domain); the interaction is direct. Interacts with the protein phosphatase PP1 subunit PPP1CA; the interaction is direct and mutually exclusive with binding to microtubules. Interacts with the protein phosphatase PP1 subunit PPP1CC; the interaction is direct and mutually exclusive with binding to microtubules. Post-translationally, phosphorylation by AURKB negatively regulates its interaction with protein phosphatase 1 (PP1) subunit PPP1CA and with microtubules. Highly expressed in testis, where it is localized in germ cells, in particular in spermatocytes and in the pre-acrosome of round spermatids. Detected in the acrosome of ejaculated spermatozoa. Detected in adult thymus, bone marrow, colon, small intestine, appendix and placenta, and in fetal liver and thymus.

It localises to the nucleus. Its subcellular location is the chromosome. It is found in the centromere. The protein localises to the kinetochore. The protein resides in the cytoplasm. In terms of biological role, acts as a component of the outer kinetochore KNL1 complex that serves as a docking point for spindle assembly checkpoint components and mediates microtubule-kinetochore interactions. Kinetochores, consisting of a centromere-associated inner segment and a microtubule-contacting outer segment, play a crucial role in chromosome segregation by mediating the physical connection between centromeric DNA and spindle microtubules. The outer kinetochore is made up of the ten-subunit KMN network, comprising the MIS12, NDC80 and KNL1 complexes, and auxiliary microtubule-associated components; together they connect the outer kinetochore with the inner kinetochore, bind microtubules, and mediate interactions with mitotic checkpoint proteins that delay anaphase until chromosomes are bioriented on the spindle. Required for kinetochore binding by a distinct subset of kMAPs (kinetochore-bound microtubule-associated proteins) and motors. Acts in coordination with CENPK to recruit the NDC80 complex to the outer kinetochore. Can bind either to microtubules or to the protein phosphatase 1 (PP1) catalytic subunits PPP1CA and PPP1CC (via overlapping binding sites), it has higher affinity for PP1. Recruits MAD2L1 to the kinetochore and also directly links BUB1 and BUB1B to the kinetochore. In addition to orienting mitotic chromosomes, it is also essential for alignment of homologous chromosomes during meiotic metaphase I. In meiosis I, required to activate the spindle assembly checkpoint at unattached kinetochores to correct erroneous kinetochore-microtubule attachments. The protein is Outer kinetochore KNL1 complex subunit KNL1 of Homo sapiens (Human).